The chain runs to 132 residues: RING-H2 finger protein ATL39 (132 aa).

Residues 10-30 (TIVFAFASIGFIAFYIINYYI) form a helical membrane-spanning segment. An RING-type; atypical zinc finger spans residues 85 to 127 (CVVCLNEFKDDETLRLVPPCVHVFHADCVDIWLSHSSTCPICR).

The protein belongs to the RING-type zinc finger family. ATL subfamily.

It is found in the membrane. It catalyses the reaction S-ubiquitinyl-[E2 ubiquitin-conjugating enzyme]-L-cysteine + [acceptor protein]-L-lysine = [E2 ubiquitin-conjugating enzyme]-L-cysteine + N(6)-ubiquitinyl-[acceptor protein]-L-lysine.. It participates in protein modification; protein ubiquitination. This Arabidopsis thaliana (Mouse-ear cress) protein is RING-H2 finger protein ATL39 (ATL39).